The chain runs to 245 residues: Endonuclease III (245 aa).

A HhH domain is found at methionine 119 to glycine 138. [4Fe-4S] cluster-binding residues include cysteine 198, cysteine 205, cysteine 208, and cysteine 214.

It belongs to the Nth/MutY family. It depends on [4Fe-4S] cluster as a cofactor.

It carries out the reaction 2'-deoxyribonucleotide-(2'-deoxyribose 5'-phosphate)-2'-deoxyribonucleotide-DNA = a 3'-end 2'-deoxyribonucleotide-(2,3-dehydro-2,3-deoxyribose 5'-phosphate)-DNA + a 5'-end 5'-phospho-2'-deoxyribonucleoside-DNA + H(+). DNA repair enzyme that has both DNA N-glycosylase activity and AP-lyase activity. The DNA N-glycosylase activity releases various damaged pyrimidines from DNA by cleaving the N-glycosidic bond, leaving an AP (apurinic/apyrimidinic) site. The AP-lyase activity cleaves the phosphodiester bond 3' to the AP site by a beta-elimination, leaving a 3'-terminal unsaturated sugar and a product with a terminal 5'-phosphate. This Mycobacterium leprae (strain TN) protein is Endonuclease III.